Reading from the N-terminus, the 553-residue chain is Hydroxylamine reductase (553 aa).

4 residues coordinate [2Fe-2S] cluster: Cys3, Cys6, Cys18, and Cys25. Residues His252, Glu276, Cys320, Cys408, Cys436, Cys461, Glu495, and Lys497 each contribute to the hybrid [4Fe-2O-2S] cluster site. Position 408 is a cysteine persulfide (Cys408).

The protein belongs to the HCP family. It depends on [2Fe-2S] cluster as a cofactor. The cofactor is hybrid [4Fe-2O-2S] cluster.

It is found in the cytoplasm. It carries out the reaction A + NH4(+) + H2O = hydroxylamine + AH2 + H(+). In terms of biological role, catalyzes the reduction of hydroxylamine to form NH(3) and H(2)O. In Photobacterium phosphoreum, this protein is Hydroxylamine reductase.